Here is a 317-residue protein sequence, read N- to C-terminus: Ribosomal protein L11 methyltransferase (317 aa).

S-adenosyl-L-methionine is bound by residues threonine 158, glycine 179, aspartate 201, and asparagine 244.

The protein belongs to the methyltransferase superfamily. PrmA family.

Its subcellular location is the cytoplasm. It carries out the reaction L-lysyl-[protein] + 3 S-adenosyl-L-methionine = N(6),N(6),N(6)-trimethyl-L-lysyl-[protein] + 3 S-adenosyl-L-homocysteine + 3 H(+). Functionally, methylates ribosomal protein L11. This is Ribosomal protein L11 methyltransferase from Streptococcus pyogenes serotype M12 (strain MGAS2096).